Consider the following 226-residue polypeptide: MNENLFASFITPVILGLPLVTLIVLFPSLLFPTSNRLVSNRFVTLQQWMLQLVSKQMMSIHNSKGQTWALMLMSLILFIGSTNLLGLLPHSFTPTTQLSMNLGMAIPLWAGAVITGFRNKTKASLAHFLPQGTPTPLIPMLVIIETISLFIQPVALAVRLTANITAGHLLIHLIGGATLALMSISTTTALITFTILILLTILEFAVAMIQAYVFTLLVSLYLHDNT.

6 consecutive transmembrane segments (helical) span residues 6–26 (FASFITPVILGLPLVTLIVLF), 68–88 (WALMLMSLILFIGSTNLLGLL), 97–117 (QLSMNLGMAIPLWAGAVITGF), 138–158 (IPMLVIIETISLFIQPVALAV), 164–184 (ITAGHLLIHLIGGATLALMSI), and 189–209 (ALITFTILILLTILEFAVAMI).

This sequence belongs to the ATPase A chain family. As to quaternary structure, component of the ATP synthase complex composed at least of ATP5F1A/subunit alpha, ATP5F1B/subunit beta, ATP5MC1/subunit c (homooctomer), MT-ATP6/subunit a, MT-ATP8/subunit 8, ATP5ME/subunit e, ATP5MF/subunit f, ATP5MG/subunit g, ATP5MK/subunit k, ATP5MJ/subunit j, ATP5F1C/subunit gamma, ATP5F1D/subunit delta, ATP5F1E/subunit epsilon, ATP5PF/subunit F6, ATP5PB/subunit b, ATP5PD/subunit d, ATP5PO/subunit OSCP. ATP synthase complex consists of a soluble F(1) head domain (subunits alpha(3) and beta(3)) - the catalytic core - and a membrane F(0) domain - the membrane proton channel (subunits c, a, 8, e, f, g, k and j). These two domains are linked by a central stalk (subunits gamma, delta, and epsilon) rotating inside the F1 region and a stationary peripheral stalk (subunits F6, b, d, and OSCP). Interacts with DNAJC30; interaction is direct.

The protein localises to the mitochondrion inner membrane. It carries out the reaction H(+)(in) = H(+)(out). Subunit a, of the mitochondrial membrane ATP synthase complex (F(1)F(0) ATP synthase or Complex V) that produces ATP from ADP in the presence of a proton gradient across the membrane which is generated by electron transport complexes of the respiratory chain. ATP synthase complex consist of a soluble F(1) head domain - the catalytic core - and a membrane F(1) domain - the membrane proton channel. These two domains are linked by a central stalk rotating inside the F(1) region and a stationary peripheral stalk. During catalysis, ATP synthesis in the catalytic domain of F(1) is coupled via a rotary mechanism of the central stalk subunits to proton translocation. With the subunit c (ATP5MC1), forms the proton-conducting channel in the F(0) domain, that contains two crucial half-channels (inlet and outlet) that facilitate proton movement from the mitochondrial intermembrane space (IMS) into the matrix. Protons are taken up via the inlet half-channel and released through the outlet half-channel, following a Grotthuss mechanism. In Bos indicus (Zebu), this protein is ATP synthase F(0) complex subunit a.